The chain runs to 865 residues: Alanine--tRNA ligase (865 aa).

Positions 554, 558, 656, and 660 each coordinate Zn(2+).

It belongs to the class-II aminoacyl-tRNA synthetase family. It depends on Zn(2+) as a cofactor.

The protein resides in the cytoplasm. The enzyme catalyses tRNA(Ala) + L-alanine + ATP = L-alanyl-tRNA(Ala) + AMP + diphosphate. Catalyzes the attachment of alanine to tRNA(Ala) in a two-step reaction: alanine is first activated by ATP to form Ala-AMP and then transferred to the acceptor end of tRNA(Ala). Also edits incorrectly charged Ser-tRNA(Ala) and Gly-tRNA(Ala) via its editing domain. This is Alanine--tRNA ligase from Francisella tularensis subsp. tularensis (strain FSC 198).